Here is a 443-residue protein sequence, read N- to C-terminus: Adenylosuccinate synthetase (443 aa).

GTP-binding positions include 12–18 (GDEGKGK) and 40–42 (GHT). Residue aspartate 13 is the Proton acceptor of the active site. Aspartate 13 and glycine 40 together coordinate Mg(2+). Residues 13 to 16 (DEGK), 38 to 41 (NAGH), threonine 128, arginine 142, glutamine 223, threonine 238, and arginine 302 contribute to the IMP site. Histidine 41 acts as the Proton donor in catalysis. 298–304 (TTTGRRR) lines the substrate pocket. Residues arginine 304, 330 to 332 (KLD), and 412 to 414 (SLG) each bind GTP.

This sequence belongs to the adenylosuccinate synthetase family. In terms of assembly, homodimer. Mg(2+) is required as a cofactor.

It localises to the cytoplasm. It carries out the reaction IMP + L-aspartate + GTP = N(6)-(1,2-dicarboxyethyl)-AMP + GDP + phosphate + 2 H(+). The protein operates within purine metabolism; AMP biosynthesis via de novo pathway; AMP from IMP: step 1/2. Functionally, plays an important role in the de novo pathway of purine nucleotide biosynthesis. Catalyzes the first committed step in the biosynthesis of AMP from IMP. The protein is Adenylosuccinate synthetase of Picosynechococcus sp. (strain ATCC 27264 / PCC 7002 / PR-6) (Agmenellum quadruplicatum).